We begin with the raw amino-acid sequence, 220 residues long: Deoxyribose-phosphate aldolase (220 aa).

Aspartate 89 functions as the Proton donor/acceptor in the catalytic mechanism. Lysine 151 serves as the catalytic Schiff-base intermediate with acetaldehyde. Lysine 180 (proton donor/acceptor) is an active-site residue.

It belongs to the DeoC/FbaB aldolase family. DeoC type 1 subfamily. In terms of assembly, homotetramer, in solution and in the crystal structure.

Its subcellular location is the cytoplasm. It catalyses the reaction 2-deoxy-D-ribose 5-phosphate = D-glyceraldehyde 3-phosphate + acetaldehyde. Its pathway is carbohydrate degradation; 2-deoxy-D-ribose 1-phosphate degradation; D-glyceraldehyde 3-phosphate and acetaldehyde from 2-deoxy-alpha-D-ribose 1-phosphate: step 2/2. Catalyzes a reversible aldol reaction between acetaldehyde and D-glyceraldehyde 3-phosphate to generate 2-deoxy-D-ribose 5-phosphate. In Thermus thermophilus (strain ATCC 27634 / DSM 579 / HB8), this protein is Deoxyribose-phosphate aldolase.